The following is a 157-amino-acid chain: Deoxyuridine 5'-triphosphate nucleotidohydrolase (157 aa).

The dUMP site is built by Ser63, Gly76, Asp79, Tyr82, Lys87, Arg132, Phe137, and Gly138. The disordered stretch occupies residues 125–157 (NDLESTERGAGGFGSTGINDEKKRKLDEAEAKE). Residues 143–157 (NDEKKRKLDEAEAKE) show a composition bias toward basic and acidic residues.

Belongs to the dUTPase family. Homotrimer. The cofactor is Mg(2+).

It carries out the reaction dUTP + H2O = dUMP + diphosphate + H(+). It participates in pyrimidine metabolism; dUMP biosynthesis; dUMP from dCTP (dUTP route): step 2/2. In terms of biological role, involved in nucleotide metabolism via production of dUMP, the immediate precursor of thymidine nucleotides, and decreases the intracellular concentration of dUTP so that uracil cannot be incorporated into DNA. This is Deoxyuridine 5'-triphosphate nucleotidohydrolase (DUT1) from Yarrowia lipolytica (strain CLIB 122 / E 150) (Yeast).